Reading from the N-terminus, the 420-residue chain is MNILDDLKARGLVYQTTDEEALYKRLESPMTLYCGFDPTADSLHIGHLLPVLMLRRFQLAGHCPIALVGGGTGLIGDPSGKTSERTLNPTEVVQEWANRIKEQLSCFLDFEGVGNPAIMANNYEWLGTINVIEFLRDIGKNFSLGSMLAKESVESRMSRGISFTEFSYQILQSYDFLKLNELYGCEMQIGGSDQWGNITSGTDLIRRMSVGEDRQVHGLTVPLVTKSDGTKFGKTEGGAVWLDPDKTSPYKFYQFWINTDDRDVVKYLNFFTFLSIEEIQGLAQEVESQPEKRNAQRMLAKEVTELVHGVEARERAEKISQALFTGGIANLTAKEVEEGFSDVPSADVEDQEMLLVDALIKVGAVSSRRQARESMESGAVYVNGIRQTDTTLTVAQLDKIESRFIVIRRGKKNYYLVKLV.

Tyr-33 contacts L-tyrosine. Positions 38–47 match the 'HIGH' region motif; sequence PTADSLHIGH. L-tyrosine-binding residues include Tyr-168 and Gln-172. The 'KMSKS' region motif lies at 231-235; the sequence is KFGKT. Residue Lys-234 participates in ATP binding. In terms of domain architecture, S4 RNA-binding spans 353–419; sequence MLLVDALIKV…GKKNYYLVKL (67 aa).

Belongs to the class-I aminoacyl-tRNA synthetase family. TyrS type 1 subfamily. Homodimer.

Its subcellular location is the cytoplasm. The catalysed reaction is tRNA(Tyr) + L-tyrosine + ATP = L-tyrosyl-tRNA(Tyr) + AMP + diphosphate + H(+). Catalyzes the attachment of tyrosine to tRNA(Tyr) in a two-step reaction: tyrosine is first activated by ATP to form Tyr-AMP and then transferred to the acceptor end of tRNA(Tyr). The sequence is that of Tyrosine--tRNA ligase from Desulfitobacterium hafniense (strain DSM 10664 / DCB-2).